The sequence spans 166 residues: Cold-inducible RNA-binding protein B (166 aa).

Residues 5-83 (GKLFIGGLNF…RQIRVDQAGK (79 aa)) enclose the RRM domain. The disordered stretch occupies residues 68–166 (GKAVDGRQIR…DSYDSYATHE (99 aa)). Residues 92–115 (YRGGSSGGRGFFRGGRGRGGGDRG) are compositionally biased toward gly residues. Residues 133-149 (GSRDYYSSGRSQGSYGD) are compositionally biased toward low complexity. Over residues 157 to 166 (DSYDSYATHE) the composition is skewed to basic and acidic residues.

Interacts with prmt1. Interacts with elavl1/elrA (via RRM3). Associates with ribosomes. Post-translationally, methylated on arginine residues within RGG motifs. Methylation by prmt1 promotes cytoplasmic accumulation. As to expression, in adults, most abundant in testis, ovary, brain and liver, with lower expression in kidney and heart.

The protein localises to the nucleus. The protein resides in the nucleoplasm. It localises to the cytoplasm. Its function is as follows. Cold-inducible mRNA binding protein. Acts cooperatively with elavl1/elrA to stabilize AU-rich element (ARE)-containing mRNAs by binding to them and inhibiting their deadenylation. Essential for embryonic gastrulation and neural development, acting to maintain the expression of a set of adhesion molecules, and cell movement during embryogenesis. Required for pronephros development. The protein is Cold-inducible RNA-binding protein B (cirbp-b) of Xenopus laevis (African clawed frog).